A 142-amino-acid polypeptide reads, in one-letter code: Large ribosomal subunit protein uL13 (142 aa).

This sequence belongs to the universal ribosomal protein uL13 family. In terms of assembly, part of the 50S ribosomal subunit.

Functionally, this protein is one of the early assembly proteins of the 50S ribosomal subunit, although it is not seen to bind rRNA by itself. It is important during the early stages of 50S assembly. This is Large ribosomal subunit protein uL13 from Alteromonas mediterranea (strain DSM 17117 / CIP 110805 / LMG 28347 / Deep ecotype).